Here is a 393-residue protein sequence, read N- to C-terminus: Polygalacturonase (393 aa).

The first 23 residues, 1–23, serve as a signal peptide directing secretion; that stretch reads MANRRSLFSLSLIFVFMINSAIA. PbH1 repeat units follow at residues 115–136, 178–204, 205–226, 228–248, 258–279, and 288–309; these read VNGV…WACK, FQNV…HVQM, SSGV…SIGP, TSNL…SIGS, VQNV…RIKS, and ARNI…VIDQ. The Proton donor role is filled by aspartate 219. Cysteines 221 and 238 form a disulfide. Residue histidine 242 is part of the active site. An N-linked (GlcNAc...) asparagine glycan is attached at asparagine 260. Intrachain disulfides connect cysteine 349-cysteine 355 and cysteine 376-cysteine 392.

It belongs to the glycosyl hydrolase 28 family.

It localises to the secreted. The protein localises to the cell wall. It carries out the reaction (1,4-alpha-D-galacturonosyl)n+m + H2O = (1,4-alpha-D-galacturonosyl)n + (1,4-alpha-D-galacturonosyl)m.. Functionally, acts in concert with the pectinesterase, in the ripening process. Is involved in cell wall metabolism, specifically in polyuronide degradation. This Prunus persica (Peach) protein is Polygalacturonase.